The chain runs to 163 residues: S-ribosylhomocysteine lyase (163 aa).

Residues H54, H58, and C128 each coordinate Fe cation.

The protein belongs to the LuxS family. Homodimer. The cofactor is Fe cation.

The catalysed reaction is S-(5-deoxy-D-ribos-5-yl)-L-homocysteine = (S)-4,5-dihydroxypentane-2,3-dione + L-homocysteine. Its function is as follows. Involved in the synthesis of autoinducer 2 (AI-2) which is secreted by bacteria and is used to communicate both the cell density and the metabolic potential of the environment. The regulation of gene expression in response to changes in cell density is called quorum sensing. Catalyzes the transformation of S-ribosylhomocysteine (RHC) to homocysteine (HC) and 4,5-dihydroxy-2,3-pentadione (DPD). The polypeptide is S-ribosylhomocysteine lyase (Wolinella succinogenes (strain ATCC 29543 / DSM 1740 / CCUG 13145 / JCM 31913 / LMG 7466 / NCTC 11488 / FDC 602W) (Vibrio succinogenes)).